The following is a 149-amino-acid chain: MSIDFPLGDDLAGYIAEAIAADPSFKGTLEDAEEARRLVDALIALRKHCQLSQVEVAKRMGVRQPTVSGFEKEPSDPKLSTLQRYARALDARLRLVLEVPTLREVPTWHRLSSYRGSARDHQVRVGADKEILMQTNWARHISVRQVEVA.

An HTH cro/C1-type domain is found at 42–96 (LIALRKHCQLSQVEVAKRMGVRQPTVSGFEKEPSDPKLSTLQRYARALDARLRLV). Positions 53–72 (QVEVAKRMGVRQPTVSGFEK) form a DNA-binding region, H-T-H motif.

As to quaternary structure, interacts with SecB-like chaperone MT2006.

In terms of biological role, antitoxin component of an atypical, type II toxin-antitoxin chaperone (TAC) system. Probably neutralizes the toxic effects of cognate toxin HigB1, which also requires SecB-like chaperone MT2006 (AC Q7D7P7). Autorepresses its operon (higB1-higA1-MT2006). This is Antitoxin HigA1 from Mycobacterium tuberculosis (strain CDC 1551 / Oshkosh).